The sequence spans 447 residues: Serine/threonine-protein phosphatase 2A 55 kDa regulatory subunit B alpha isoform (447 aa).

Residue Ala2 is modified to N-acetylalanine. WD repeat units lie at residues 11-80 (QWCF…FQSH), 94-174 (EKIN…IFAN), 175-218 (AHTY…VDIK), 227-270 (EVIT…KLFE), 288-325 (ISDVKFSHSGRYMMTRDYLSVKIWDLNMENRPVETYQV), 347-381 (ECCWNGSDSVVMTGSYNNFFRMFDRNTKRDITLEA), and 414-446 (DFNKKILHTAWHPKENIIAVATTNNLYIFQDKV).

Belongs to the phosphatase 2A regulatory subunit B family. PP2A consists of a common heterodimeric core enzyme, composed of a 36 kDa catalytic subunit (subunit C) and a 65 kDa constant regulatory subunit (PR65 or subunit A), that associates with a variety of regulatory subunits. Proteins that associate with the core dimer include three families of regulatory subunits B (the R2/B/PR55/B55, R3/B''/PR72/PR130/PR59 and R5/B'/B56 families), the 48 kDa variable regulatory subunit, viral proteins, and cell signaling molecules. Interacts with the PP2A C catalytic subunit PPP2CA. Interacts with the PP2A A subunit PPP2R1A. Interacts with TP53. Interacts with IER5. Interacts with MFHAS1; the interaction is direct. Interacts with PABIR1/FAM122A (via its N-terminus); the interaction is direct and inhibits PP2A activity. Interacts with ARPP19; the interaction is direct and inhibits PP2A activity. Interacts with CRTC3. In terms of tissue distribution, expressed in all tissues examined.

In terms of biological role, substrate-recognition subunit of protein phosphatase 2A (PP2A) that plays a key role in cell cycle by controlling mitosis entry and exit. Involved in chromosome clustering during late mitosis by mediating dephosphorylation of MKI67. Essential for serine/threonine-protein phosphatase 2A-mediated dephosphorylation of WEE1, preventing its ubiquitin-mediated proteolysis, increasing WEE1 protein levels, and promoting the G2/M checkpoint. The sequence is that of Serine/threonine-protein phosphatase 2A 55 kDa regulatory subunit B alpha isoform (PPP2R2A) from Homo sapiens (Human).